Reading from the N-terminus, the 130-residue chain is Flagellar assembly factor FliW (130 aa).

This sequence belongs to the FliW family. As to quaternary structure, interacts with translational regulator CsrA and flagellin(s).

The protein localises to the cytoplasm. Acts as an anti-CsrA protein, binds CsrA and prevents it from repressing translation of its target genes, one of which is flagellin. Binds to flagellin and participates in the assembly of the flagellum. The sequence is that of Flagellar assembly factor FliW from Borrelia hermsii (strain HS1 / DAH).